The chain runs to 59 residues: Photosystem II reaction center protein K (59 aa).

Positions 1-22 (MLNIFSLICLNSALYSSSFFFG) are excised as a propeptide. The chain crosses the membrane as a helical span at residues 30–50 (FLSPIVDFMPVIPLFFFLLAF).

In terms of assembly, PSII is composed of 1 copy each of membrane proteins PsbA, PsbB, PsbC, PsbD, PsbE, PsbF, PsbH, PsbI, PsbJ, PsbK, PsbL, PsbM, PsbT, PsbX, PsbY, PsbZ, Psb30/Ycf12, at least 3 peripheral proteins of the oxygen-evolving complex and a large number of cofactors. It forms dimeric complexes. This protein, PsbL and plastoquinone-9 are found in PSII dimers but not seen in PSII monomers.

The protein localises to the plastid. It localises to the chloroplast thylakoid membrane. Functionally, one of the components of the core complex of photosystem II (PSII). PSII is a light-driven water:plastoquinone oxidoreductase that uses light energy to abstract electrons from H(2)O, generating O(2) and a proton gradient subsequently used for ATP formation. It consists of a core antenna complex that captures photons, and an electron transfer chain that converts photonic excitation into a charge separation. May be involved in PSII dimerization. One of the components of the core complex of photosystem II (PSII). PSII is a light-driven water:plastoquinone oxidoreductase that uses light energy to abstract electrons from H(2)O, generating O(2) and a proton gradient subsequently used for ATP formation. It consists of a core antenna complex that captures photons, and an electron transfer chain that converts photonic excitation into a charge separation. This Spinacia oleracea (Spinach) protein is Photosystem II reaction center protein K.